The following is a 58-amino-acid chain: Parvalbumin beta 3 (58 aa).

Ala-1 carries the post-translational modification N-acetylalanine. An EF-hand domain is found at 24–58 (FNYKTFFKFFAIIDQDHSGFIEEEELKALSDAETK). The Ca(2+) site is built by Asp-37, Asp-39, Ser-41, Phe-43, Glu-45, and Glu-48.

Belongs to the parvalbumin family.

Functionally, in muscle, parvalbumin is thought to be involved in relaxation after contraction. It binds two calcium ions. The polypeptide is Parvalbumin beta 3 (Merluccius senegalensis (Senegalese hake)).